The sequence spans 545 residues: Glucose-6-phosphate isomerase (545 aa).

Catalysis depends on Glu-351, which acts as the Proton donor. Catalysis depends on residues His-382 and Lys-510.

Belongs to the GPI family.

It is found in the cytoplasm. It carries out the reaction alpha-D-glucose 6-phosphate = beta-D-fructose 6-phosphate. It participates in carbohydrate biosynthesis; gluconeogenesis. It functions in the pathway carbohydrate degradation; glycolysis; D-glyceraldehyde 3-phosphate and glycerone phosphate from D-glucose: step 2/4. Its function is as follows. Catalyzes the reversible isomerization of glucose-6-phosphate to fructose-6-phosphate. The protein is Glucose-6-phosphate isomerase of Shewanella frigidimarina (strain NCIMB 400).